Here is an 84-residue protein sequence, read N- to C-terminus: Exodeoxyribonuclease 7 small subunit (84 aa).

It belongs to the XseB family. In terms of assembly, heterooligomer composed of large and small subunits.

It localises to the cytoplasm. The enzyme catalyses Exonucleolytic cleavage in either 5'- to 3'- or 3'- to 5'-direction to yield nucleoside 5'-phosphates.. Functionally, bidirectionally degrades single-stranded DNA into large acid-insoluble oligonucleotides, which are then degraded further into small acid-soluble oligonucleotides. This chain is Exodeoxyribonuclease 7 small subunit, found in Caulobacter vibrioides (strain ATCC 19089 / CIP 103742 / CB 15) (Caulobacter crescentus).